We begin with the raw amino-acid sequence, 388 residues long: Alanine racemase (388 aa).

The active-site Proton acceptor; specific for D-alanine is the lysine 39. Residue lysine 39 is modified to N6-(pyridoxal phosphate)lysine. Lysine 129 carries the N6-carboxylysine modification. Residue arginine 136 coordinates substrate. Residue tyrosine 265 is the Proton acceptor; specific for L-alanine of the active site. Methionine 312 lines the substrate pocket.

Belongs to the alanine racemase family. In terms of assembly, homodimer. The cofactor is pyridoxal 5'-phosphate.

The catalysed reaction is L-alanine = D-alanine. Its pathway is amino-acid biosynthesis; D-alanine biosynthesis; D-alanine from L-alanine: step 1/1. Its activity is regulated as follows. Inhibited by acetate and propionate. Irreversibly inhibited by cycloserine. In terms of biological role, catalyzes the interconversion of L-alanine and D-alanine. Also weakly active on serine. The polypeptide is Alanine racemase (alr) (Geobacillus stearothermophilus (Bacillus stearothermophilus)).